The primary structure comprises 94 residues: Aspartyl/glutamyl-tRNA(Asn/Gln) amidotransferase subunit C (94 aa).

The protein belongs to the GatC family. Heterotrimer of A, B and C subunits.

It catalyses the reaction L-glutamyl-tRNA(Gln) + L-glutamine + ATP + H2O = L-glutaminyl-tRNA(Gln) + L-glutamate + ADP + phosphate + H(+). The enzyme catalyses L-aspartyl-tRNA(Asn) + L-glutamine + ATP + H2O = L-asparaginyl-tRNA(Asn) + L-glutamate + ADP + phosphate + 2 H(+). In terms of biological role, allows the formation of correctly charged Asn-tRNA(Asn) or Gln-tRNA(Gln) through the transamidation of misacylated Asp-tRNA(Asn) or Glu-tRNA(Gln) in organisms which lack either or both of asparaginyl-tRNA or glutaminyl-tRNA synthetases. The reaction takes place in the presence of glutamine and ATP through an activated phospho-Asp-tRNA(Asn) or phospho-Glu-tRNA(Gln). This chain is Aspartyl/glutamyl-tRNA(Asn/Gln) amidotransferase subunit C, found in Nitratidesulfovibrio vulgaris (strain ATCC 29579 / DSM 644 / CCUG 34227 / NCIMB 8303 / VKM B-1760 / Hildenborough) (Desulfovibrio vulgaris).